A 140-amino-acid chain; its full sequence is Cytochrome B5 isoform D (140 aa).

The 77-residue stretch at glycine 5–aspartate 81 folds into the Cytochrome b5 heme-binding domain. Heme-binding residues include histidine 40 and histidine 64. The chain crosses the membrane as a helical span at residues phenylalanine 109 to isoleucine 129.

Belongs to the cytochrome b5 family. Interacts with CER1, BI-1, FAH1 and FAH2. Expressed in roots, stems, leaves, flowers and siliques.

It is found in the endoplasmic reticulum membrane. Functionally, membrane bound hemoprotein which function as an electron carrier for several membrane bound oxygenases, including fatty acid desaturases. The protein is Cytochrome B5 isoform D of Arabidopsis thaliana (Mouse-ear cress).